The sequence spans 160 residues: Zinc finger A20 and AN1 domain-containing stress-associated protein 5 (160 aa).

The A20-type zinc finger occupies 20-54; the sequence is TTTTTLCTNNCGVTANPATNNMCQKCFNASLVSAA. Positions 26, 30, 42, 45, 101, 104, 115, 117, 122, 125, 131, and 133 each coordinate Zn(2+). The segment at 95–141 adopts an AN1-type zinc-finger fold; sequence QQIVNRCSGCRKKVGLTGFRCRCGELFCSEHRYSDRHDCSYDYKTAG.

May be involved in environmental stress response. In Arabidopsis thaliana (Mouse-ear cress), this protein is Zinc finger A20 and AN1 domain-containing stress-associated protein 5 (SAP5).